The chain runs to 683 residues: MADKKNLLLLFDHPTEPVFMDKGGNGTVFDVPDSYVTDRYNQMCKKVQRRVSSASEKNVQVKEIAIPDLSCSMRLGRSEQFSIFLKSHRKMASHLIEIFTKMQTVDELQSVAVYARDRVNPVLFNYALSVALLHRPDTKDLELPAFAQTFPDRFIDSKMLRSMREESFVVERSAARLPVVSSVKYTASDLDVEHRLWYFREDLGVNLHHWHWHLVYPIEAPDRSIVDKDRRGELFYYMHQQIIARYNAERLSNHMARVQPFNNLDEPIAEGYFPKMDSLVASRAYPPRFDNTRLSDVDRPNNQLRVGIDDMKRWRERIYEAIHQGYVLDTNNEKIVLDDAKGIDILGNIIEASDLTPNSTLYGDFHNMGHILIAYSHDPTNKHLEYAGVMGDASTAMRDPIFYKWHAFIDNMFQEHKRLLSPYEKQELSFPDVRVESIQVESQGQVNRLTTFWQESDVDMSRGLDFVPRGHVLARFTHLQHHEFSYTIKVENSSEATRYGYVRIFLAPKLDDRNAPMLLEQQRLMMVELDKFVVTMPPGSHTITRNSTESSVTIPFERTFRNLDKLEELQNFLCGCGWPQHMLIPKGRPEGLRFELFVMVSNYEEDKVDQTVADCGCSIAASYCGLRDRLYPDRKSMGFPFDRKPRRGSEILENFLTPNMCAVEVIITHEDRTEKLREVPARS.

Residues 1–48 constitute a propeptide that is removed on maturation; the sequence is MADKKNLLLLFDHPTEPVFMDKGGNGTVFDVPDSYVTDRYNQMCKKVQ. Residues H209, H213, and H239 each coordinate Cu cation. Catalysis depends on E351, which acts as the Proton acceptor. The N-linked (GlcNAc...) asparagine glycan is linked to N358. Residues H366, H370, and H406 each coordinate Cu cation. 2 N-linked (GlcNAc...) asparagine glycosylation sites follow: N492 and N546. Disulfide bonds link C574–C617 and C576–C624.

Belongs to the tyrosinase family. It depends on Cu(2+) as a cofactor. In terms of processing, upon activation, a trypsin type protease cleaves prophenol oxidase to yield the active enzyme.

Its subcellular location is the secreted. It carries out the reaction 2 L-dopa + O2 = 2 L-dopaquinone + 2 H2O. It catalyses the reaction L-tyrosine + O2 = L-dopaquinone + H2O. Its function is as follows. This is a copper-containing oxidase that functions in the formation of pigments such as melanins and other polyphenolic compounds. Catalyzes the rate-limiting conversions of tyrosine to DOPA, DOPA to DOPA-quinone and possibly 5,6 dihydroxyindole to indole-5'6 quinone. The protein is Phenoloxidase 3 (PPO3) of Drosophila melanogaster (Fruit fly).